We begin with the raw amino-acid sequence, 311 residues long: Putative S-adenosyl-L-methionine-dependent methyltransferase MMAR_0358 (311 aa).

S-adenosyl-L-methionine is bound by residues aspartate 132 and 161-162 (DL).

The protein belongs to the UPF0677 family.

Its function is as follows. Exhibits S-adenosyl-L-methionine-dependent methyltransferase activity. This chain is Putative S-adenosyl-L-methionine-dependent methyltransferase MMAR_0358, found in Mycobacterium marinum (strain ATCC BAA-535 / M).